The chain runs to 128 residues: 14 kDa zinc-binding protein (128 aa).

The HIT domain maps to isoleucine 18–glycine 128. A Histidine triad motif motif is present at residues histidine 112–histidine 116.

In terms of assembly, homodimer.

This Zea mays (Maize) protein is 14 kDa zinc-binding protein (ZBP14).